The chain runs to 275 residues: MTPSPVLNLLVSNDDGIFSQGVRTLANTLVAAGHEVTVVCPDRERSATGHGLTLHRPIRAGIVEDVFDPRIKAWSCSGTPADCVKFALHAVMPRYPDFVLSGVNHGANLGTDVLYSGTVSAAMEGLIEGIPSIALSLVSFTATDFQPAADFANCFVQHLWRSPLTEPTLFSINIPAVPAEQIAGVRLTRQGLQRYSETFEERYDPRGKRYYWLAGERVKEIPQPDYLRLNRRIPTDVQASQDNFITITPLQYNLTDINGVNIIEKTNWLDHLNFD.

Residues D14, D15, S46, and N104 each contribute to the a divalent metal cation site.

It belongs to the SurE nucleotidase family. It depends on a divalent metal cation as a cofactor.

The protein localises to the cytoplasm. It carries out the reaction a ribonucleoside 5'-phosphate + H2O = a ribonucleoside + phosphate. Its function is as follows. Nucleotidase that shows phosphatase activity on nucleoside 5'-monophosphates. The chain is 5'-nucleotidase SurE from Synechocystis sp. (strain ATCC 27184 / PCC 6803 / Kazusa).